The following is a 366-amino-acid chain: NADH-quinone oxidoreductase subunit D (366 aa).

It belongs to the complex I 49 kDa subunit family. NDH-1 is composed of 14 different subunits. Subunits NuoB, C, D, E, F, and G constitute the peripheral sector of the complex.

The protein resides in the cell membrane. It catalyses the reaction a quinone + NADH + 5 H(+)(in) = a quinol + NAD(+) + 4 H(+)(out). In terms of biological role, NDH-1 shuttles electrons from NADH, via FMN and iron-sulfur (Fe-S) centers, to quinones in the respiratory chain. The immediate electron acceptor for the enzyme in this species is believed to be a menaquinone. Couples the redox reaction to proton translocation (for every two electrons transferred, four hydrogen ions are translocated across the cytoplasmic membrane), and thus conserves the redox energy in a proton gradient. The protein is NADH-quinone oxidoreductase subunit D of Bacillus cereus (strain ATCC 14579 / DSM 31 / CCUG 7414 / JCM 2152 / NBRC 15305 / NCIMB 9373 / NCTC 2599 / NRRL B-3711).